A 204-amino-acid chain; its full sequence is Large ribosomal subunit protein uL4 (204 aa).

Residues Thr49–Ser75 form a disordered region.

It belongs to the universal ribosomal protein uL4 family. Part of the 50S ribosomal subunit.

In terms of biological role, one of the primary rRNA binding proteins, this protein initially binds near the 5'-end of the 23S rRNA. It is important during the early stages of 50S assembly. It makes multiple contacts with different domains of the 23S rRNA in the assembled 50S subunit and ribosome. Functionally, forms part of the polypeptide exit tunnel. The polypeptide is Large ribosomal subunit protein uL4 (Campylobacter hominis (strain ATCC BAA-381 / DSM 21671 / CCUG 45161 / LMG 19568 / NCTC 13146 / CH001A)).